We begin with the raw amino-acid sequence, 204 residues long: Paraneoplastic antigen-like protein 8C (204 aa).

The interval proline 135–leucine 204 is disordered. A compositionally biased stretch (basic residues) spans valine 182–leucine 204.

It belongs to the PNMA family.

The sequence is that of Paraneoplastic antigen-like protein 8C from Homo sapiens (Human).